The chain runs to 398 residues: Phosphoglycerate kinase (398 aa).

Residues D23–N25, R38, H61–K64, R122, and R155 each bind substrate. Residues K206, G297, E328, and G354–S357 each bind ATP.

The protein belongs to the phosphoglycerate kinase family. In terms of assembly, monomer.

It localises to the cytoplasm. It catalyses the reaction (2R)-3-phosphoglycerate + ATP = (2R)-3-phospho-glyceroyl phosphate + ADP. It participates in carbohydrate degradation; glycolysis; pyruvate from D-glyceraldehyde 3-phosphate: step 2/5. In Clostridium botulinum (strain Hall / ATCC 3502 / NCTC 13319 / Type A), this protein is Phosphoglycerate kinase.